The primary structure comprises 97 residues: Putative defensin-like protein 240 (97 aa).

A signal peptide spans 1-23; it reads MRYTTSFIVFCFYIFLFTNLVQG. 4 cysteine pairs are disulfide-bonded: Cys-29–Cys-88, Cys-39–Cys-69, Cys-47–Cys-85, and Cys-67–Cys-87.

The protein belongs to the DEFL family.

The protein resides in the secreted. In Arabidopsis thaliana (Mouse-ear cress), this protein is Putative defensin-like protein 240 (SCRL18).